A 588-amino-acid polypeptide reads, in one-letter code: Proteasome-associated ATPase (588 aa).

Basic and acidic residues predominate over residues Met-1–Arg-10. Positions Met-1–Gly-23 are disordered. Residues Arg-47–Pro-94 adopt a coiled-coil conformation. Gly-276–Leu-281 contributes to the ATP binding site. The segment at Tyr-587 to Leu-588 is docks into pockets in the proteasome alpha-ring.

It belongs to the AAA ATPase family. Homohexamer. Assembles into a hexameric ring structure that caps the 20S proteasome core. Strongly interacts with the prokaryotic ubiquitin-like protein Pup through a hydrophobic interface; the interacting region of ARC lies in its N-terminal coiled-coil domain. There is one Pup binding site per ARC hexamer ring. Upon ATP-binding, the C-terminus of ARC interacts with the alpha-rings of the proteasome core, possibly by binding to the intersubunit pockets.

Its pathway is protein degradation; proteasomal Pup-dependent pathway. ATPase which is responsible for recognizing, binding, unfolding and translocation of pupylated proteins into the bacterial 20S proteasome core particle. May be essential for opening the gate of the 20S proteasome via an interaction with its C-terminus, thereby allowing substrate entry and access to the site of proteolysis. Thus, the C-termini of the proteasomal ATPase may function like a 'key in a lock' to induce gate opening and therefore regulate proteolysis. The sequence is that of Proteasome-associated ATPase from Streptomyces avermitilis (strain ATCC 31267 / DSM 46492 / JCM 5070 / NBRC 14893 / NCIMB 12804 / NRRL 8165 / MA-4680).